The following is a 545-amino-acid chain: Chaperonin GroEL 2 (545 aa).

Residues 29–32 (TLGP), 86–90 (DGTTT), G413, 479–481 (NAA), and D495 contribute to the ATP site.

This sequence belongs to the chaperonin (HSP60) family. In terms of assembly, forms a cylinder of 14 subunits composed of two heptameric rings stacked back-to-back. Interacts with the co-chaperonin GroES.

The protein resides in the cytoplasm. The enzyme catalyses ATP + H2O + a folded polypeptide = ADP + phosphate + an unfolded polypeptide.. Functionally, together with its co-chaperonin GroES, plays an essential role in assisting protein folding. The GroEL-GroES system forms a nano-cage that allows encapsulation of the non-native substrate proteins and provides a physical environment optimized to promote and accelerate protein folding. The polypeptide is Chaperonin GroEL 2 (Prochlorococcus marinus (strain AS9601)).